The primary structure comprises 458 residues: Argininosuccinate lyase (458 aa).

The protein belongs to the lyase 1 family. Argininosuccinate lyase subfamily.

The protein resides in the cytoplasm. It carries out the reaction 2-(N(omega)-L-arginino)succinate = fumarate + L-arginine. Its pathway is amino-acid biosynthesis; L-arginine biosynthesis; L-arginine from L-ornithine and carbamoyl phosphate: step 3/3. The polypeptide is Argininosuccinate lyase (Anoxybacillus flavithermus (strain DSM 21510 / WK1)).